A 146-amino-acid polypeptide reads, in one-letter code: Nucleoside diphosphate kinase (146 aa).

Positions 11, 59, 87, 93, 104, and 114 each coordinate ATP. H117 acts as the Pros-phosphohistidine intermediate in catalysis.

Belongs to the NDK family. In terms of assembly, homotetramer. Mg(2+) serves as cofactor.

It localises to the cytoplasm. It catalyses the reaction a 2'-deoxyribonucleoside 5'-diphosphate + ATP = a 2'-deoxyribonucleoside 5'-triphosphate + ADP. It carries out the reaction a ribonucleoside 5'-diphosphate + ATP = a ribonucleoside 5'-triphosphate + ADP. Functionally, major role in the synthesis of nucleoside triphosphates other than ATP. The ATP gamma phosphate is transferred to the NDP beta phosphate via a ping-pong mechanism, using a phosphorylated active-site intermediate. In Anaplasma marginale (strain Florida), this protein is Nucleoside diphosphate kinase.